Consider the following 86-residue polypeptide: Large ribosomal subunit protein uL23 (86 aa).

This sequence belongs to the universal ribosomal protein uL23 family. Part of the 50S ribosomal subunit. Contacts protein L29.

Functionally, binds to 23S rRNA. One of the proteins that surrounds the polypeptide exit tunnel on the outside of the ribosome. This chain is Large ribosomal subunit protein uL23, found in Thermococcus onnurineus (strain NA1).